Here is a 2253-residue protein sequence, read N- to C-terminus: Polycystin family receptor for egg jelly (2253 aa).

The first 19 residues, 1–19, serve as a signal peptide directing secretion; the sequence is MRPGPALLLLGVGLSLSVG. At 20-1184 the chain is on the extracellular side; that stretch reads RLPLPPVPRG…NIIKSLHQNP (1165 aa). The segment covering 154-169 has biased composition (low complexity); the sequence is RPASPAARVSPRSAAP. The disordered stretch occupies residues 154–177; that stretch reads RPASPAARVSPRSAAPGPRPQQGF. Asn-197, Asn-242, Asn-295, Asn-306, Asn-345, Asn-349, Asn-481, Asn-674, Asn-849, Asn-890, Asn-923, Asn-939, Asn-958, and Asn-965 each carry an N-linked (GlcNAc...) asparagine glycan. The REJ domain occupies 215–913; sequence CVIQRVRINT…STMFCDFTND (699 aa). A helical transmembrane segment spans residues 1185–1205; the sequence is VTLFTVLFIILLYVGLAFWAL. Residues 1206–1389 are Cytoplasmic-facing; it reads YRDEMDQHLR…VAKTFNRLQR (184 aa). The region spanning 1230 to 1347 is the PLAT domain; that stretch reads LCYLVTIFTG…TLDRTFHVTH (118 aa). A helical transmembrane segment spans residues 1390–1410; the sequence is LSCCLAMLLSSLLCNIMFFNL. Over 1411 to 1427 the chain is Extracellular; that stretch reads NRQEQTESRERKYMRSM. Residues 1428-1448 traverse the membrane as a helical segment; the sequence is MIGIESVLITIPVQLLITFLF. Residues 1449-1576 are Cytoplasmic-facing; that stretch reads TCSQRKPQAD…KPRIVLPWWC (128 aa). The segment at 1494–1562 is disordered; it reads PREVAKPASK…EQHPSQKDLQ (69 aa). The span at 1517–1527 shows a compositional bias: basic residues; sequence SKPKHRHRKAQ. Basic and acidic residues predominate over residues 1549-1558; the sequence is DVHSEQHPSQ. A helical membrane pass occupies residues 1577-1597; sequence VYVAWFLVFATSSISSFFIVF. The Extracellular segment spans residues 1598–1607; it reads YGLTYGYDKS. The helical transmembrane segment at 1608 to 1628 threads the bilayer; sequence IEWLFASFCSFCQSVLLVQPS. Topologically, residues 1629 to 1708 are cytoplasmic; sequence KIILLSGFRT…RKKRIKRRAL (80 aa). The chain crosses the membrane as a helical span at residues 1709–1729; sequence LFLSYILTHFIFLALLLILIV. Topologically, residues 1730 to 1966 are extracellular; that stretch reads LLRHTDCFYY…FDRKASAEIY (237 aa). Residues Asn-1836, Asn-1893, and Asn-1944 are each glycosylated (N-linked (GlcNAc...) asparagine). A helical membrane pass occupies residues 1967-1987; the sequence is LYVAILIFFLAYVVDEGCIIM. The Cytoplasmic portion of the chain corresponds to 1988–1996; it reads QERASYVRS. A helical transmembrane segment spans residues 1997–2017; sequence VYNLLNFALKCIFTVLIVLFL. Topologically, residues 2018–2042 are extracellular; that stretch reads RKHFLATGIIRFYLSNPEDFIPFHA. The helical transmembrane segment at 2043-2063 threads the bilayer; the sequence is VSQVDHIMRIILGFLLFLTIL. Over 2064 to 2091 the chain is Cytoplasmic; sequence KTLRYSRFFYDVRLAQRAIQAALPGICH. A helical transmembrane segment spans residues 2092 to 2112; it reads MAFVVSVYFFVYMAFGYLVFG. Over 2113–2145 the chain is Extracellular; the sequence is QHEWNYSNLIHSTQTVFSYCVSAFQNTEFSNNR. Residues 2146–2166 form a helical membrane-spanning segment; the sequence is ILGVLFLSSFMLVMICVLINL. Residues 2167–2253 lie on the Cytoplasmic side of the membrane; sequence FQAVILSAYE…NGKKMVYLVV (87 aa).

The protein belongs to the polycystin family. In terms of tissue distribution, exclusively expressed in testis.

It is found in the cell membrane. It localises to the cytoplasmic vesicle. Its subcellular location is the secretory vesicle. The protein resides in the acrosome membrane. The protein localises to the nucleus. Its function is as follows. Testis-specific protein that controls sperm transport and the timing of zona pellucida-evoked exocytosis of the sperm acrosome. The chain is Polycystin family receptor for egg jelly from Homo sapiens (Human).